Reading from the N-terminus, the 558-residue chain is Dihydroxy-acid dehydratase (558 aa).

Position 78 (Asp78) interacts with Mg(2+). Cys119 is a binding site for [2Fe-2S] cluster. Mg(2+)-binding residues include Asp120 and Lys121. The residue at position 121 (Lys121) is an N6-carboxylysine. [2Fe-2S] cluster is bound at residue Cys191. Glu443 contacts Mg(2+). Ser469 (proton acceptor) is an active-site residue.

The protein belongs to the IlvD/Edd family. Homodimer. [2Fe-2S] cluster serves as cofactor. The cofactor is Mg(2+).

It catalyses the reaction (2R)-2,3-dihydroxy-3-methylbutanoate = 3-methyl-2-oxobutanoate + H2O. The catalysed reaction is (2R,3R)-2,3-dihydroxy-3-methylpentanoate = (S)-3-methyl-2-oxopentanoate + H2O. Its pathway is amino-acid biosynthesis; L-isoleucine biosynthesis; L-isoleucine from 2-oxobutanoate: step 3/4. The protein operates within amino-acid biosynthesis; L-valine biosynthesis; L-valine from pyruvate: step 3/4. In terms of biological role, functions in the biosynthesis of branched-chain amino acids. Catalyzes the dehydration of (2R,3R)-2,3-dihydroxy-3-methylpentanoate (2,3-dihydroxy-3-methylvalerate) into 2-oxo-3-methylpentanoate (2-oxo-3-methylvalerate) and of (2R)-2,3-dihydroxy-3-methylbutanoate (2,3-dihydroxyisovalerate) into 2-oxo-3-methylbutanoate (2-oxoisovalerate), the penultimate precursor to L-isoleucine and L-valine, respectively. The chain is Dihydroxy-acid dehydratase from Solidesulfovibrio magneticus (strain ATCC 700980 / DSM 13731 / RS-1) (Desulfovibrio magneticus).